A 158-amino-acid chain; its full sequence is S-ribosylhomocysteine lyase (158 aa).

The Fe cation site is built by His54, His58, and Cys124.

Belongs to the LuxS family. As to quaternary structure, homodimer. Fe cation is required as a cofactor.

It carries out the reaction S-(5-deoxy-D-ribos-5-yl)-L-homocysteine = (S)-4,5-dihydroxypentane-2,3-dione + L-homocysteine. Functionally, involved in the synthesis of autoinducer 2 (AI-2) which is secreted by bacteria and is used to communicate both the cell density and the metabolic potential of the environment. The regulation of gene expression in response to changes in cell density is called quorum sensing. Catalyzes the transformation of S-ribosylhomocysteine (RHC) to homocysteine (HC) and 4,5-dihydroxy-2,3-pentadione (DPD). This chain is S-ribosylhomocysteine lyase, found in Lactobacillus gasseri (strain ATCC 33323 / DSM 20243 / BCRC 14619 / CIP 102991 / JCM 1131 / KCTC 3163 / NCIMB 11718 / NCTC 13722 / AM63).